Here is a 132-residue protein sequence, read N- to C-terminus: Chemokine-like protein TAFA-5 (132 aa).

The first 43 residues, 1 to 43 (MAPSPRTGSRQDATALPSMSSTFWAFMILASLLIAYCSQLAAG), serve as a signal peptide directing secretion. Asn113 carries N-linked (GlcNAc...) asparagine glycosylation.

The protein belongs to the TAFA family.

Its subcellular location is the secreted. In terms of biological role, acts as a chemokine-like protein by regulating cell proliferation and migration through activation of G protein-coupled receptors (GPCRs), such as S1PR2 and FPR2. Stimulates chemotactic migration of macrophages mediated by the MAPK3/ERK1 and AKT1 pathway. Blocks TNFSF11/RANKL-induced osteoclast formation from macrophages by inhibiting up-regulation of osteoclast fusogenic and differentiation genes. Stimulation of macrophage migration and inhibition of osteoclast formation is mediated through the GPCR FPR2. Acts as an adipokine by negatively regulating vascular smooth muscle cell (VSMC) proliferation and migration in response to platelet-derived growth factor stimulation via GPCR S1PR2 and G protein GNA12/GNA13-transmitted RHOA signaling. Inhibits injury-induced cell proliferation and neointima formation in the femoral arteries. This Bos taurus (Bovine) protein is Chemokine-like protein TAFA-5 (TAFA5).